Consider the following 182-residue polypeptide: ADP-ribosylation factor-like protein 3 (182 aa).

Gly-2 carries N-myristoyl glycine lipidation. Ser-5 bears the Phosphoserine mark. GTP is bound by residues Gly-24 to Thr-31, Thr-48, Asp-67 to Gln-71, Gly-70, Asn-126 to Asp-129, and Ser-159 to Leu-161. Residues Thr-31 and Thr-48 each coordinate Mg(2+).

Belongs to the small GTPase superfamily. Arf family. As to quaternary structure, found in a complex with ARL3, RP2 and UNC119 (or UNC119B); RP2 induces hydrolysis of GTP ARL3 in the complex, leading to the release of UNC119 (or UNC119B). Interacts with RP2; interaction is direct and stimulated with the activated GTP-bound form of ARL3. Interacts with SYS1. Interacts with ARL2BP; the GTP-bound form interacts with ARL2BP. Microtubule-associated protein. Does not interact with TBCC. Interacts with RP2. Interacts with PDE6D; the interaction occurs specifically with the GTP-bound form of ARL3. Interacts with GGA1; the interaction recruits PKD1:PKD2 complex to trans-Golgi network and is required for ciliary targeting of PKD1:PKD2 complex. Interacts with DNAAF9.

It is found in the golgi apparatus membrane. The protein localises to the cytoplasm. Its subcellular location is the cytoskeleton. It localises to the spindle. The protein resides in the nucleus. It is found in the microtubule organizing center. The protein localises to the centrosome. Its subcellular location is the cell projection. It localises to the cilium. In terms of biological role, small GTP-binding protein which cycles between an inactive GDP-bound and an active GTP-bound form, and the rate of cycling is regulated by guanine nucleotide exchange factors (GEF) and GTPase-activating proteins (GAP). Required for normal cytokinesis and cilia signaling. Requires assistance from GTPase-activating proteins (GAPs) like RP2 and PDE6D, in order to cycle between inactive GDP-bound and active GTP-bound forms. Required for targeting proteins to the cilium, including myristoylated NPHP3 and prenylated INPP5E. Targets NPHP3 to the ciliary membrane by releasing myristoylated NPHP3 from UNC119B cargo adapter into the cilium. Required for PKD1:PKD2 complex targeting from the trans-Golgi network to the cilium. This chain is ADP-ribosylation factor-like protein 3 (Arl3), found in Rattus norvegicus (Rat).